The chain runs to 875 residues: DNA gyrase subunit A (875 aa).

In terms of domain architecture, Topo IIA-type catalytic spans 34–533 (LPDVRDGLKP…NSADINLEDL (500 aa)). Tyrosine 122 functions as the O-(5'-phospho-DNA)-tyrosine intermediate in the catalytic mechanism. Residues 560–566 (QRRGGKG) carry the GyrA-box motif. A disordered region spans residues 841–875 (EPVDEEDLDTIDGSAAEGDDEIAPEVDVDDEPEEE). The segment covering 857–875 (EGDDEIAPEVDVDDEPEEE) has biased composition (acidic residues).

Belongs to the type II topoisomerase GyrA/ParC subunit family. Heterotetramer, composed of two GyrA and two GyrB chains. In the heterotetramer, GyrA contains the active site tyrosine that forms a transient covalent intermediate with DNA, while GyrB binds cofactors and catalyzes ATP hydrolysis.

The protein resides in the cytoplasm. It carries out the reaction ATP-dependent breakage, passage and rejoining of double-stranded DNA.. Its function is as follows. A type II topoisomerase that negatively supercoils closed circular double-stranded (ds) DNA in an ATP-dependent manner to modulate DNA topology and maintain chromosomes in an underwound state. Negative supercoiling favors strand separation, and DNA replication, transcription, recombination and repair, all of which involve strand separation. Also able to catalyze the interconversion of other topological isomers of dsDNA rings, including catenanes and knotted rings. Type II topoisomerases break and join 2 DNA strands simultaneously in an ATP-dependent manner. This is DNA gyrase subunit A from Shigella flexneri.